A 582-amino-acid polypeptide reads, in one-letter code: Aspartate--tRNA(Asp/Asn) ligase (582 aa).

Residue Glu177 coordinates L-aspartate. The interval 201 to 204 (QLFK) is aspartate. Arg223 lines the L-aspartate pocket. ATP contacts are provided by residues 223–225 (RDE) and Gln232. His447 is a binding site for L-aspartate. Glu481 serves as a coordination point for ATP. Arg488 serves as a coordination point for L-aspartate. 533 to 536 (GLDR) contacts ATP.

It belongs to the class-II aminoacyl-tRNA synthetase family. Type 1 subfamily. Homodimer.

It localises to the cytoplasm. The enzyme catalyses tRNA(Asx) + L-aspartate + ATP = L-aspartyl-tRNA(Asx) + AMP + diphosphate. Functionally, aspartyl-tRNA synthetase with relaxed tRNA specificity since it is able to aspartylate not only its cognate tRNA(Asp) but also tRNA(Asn). Reaction proceeds in two steps: L-aspartate is first activated by ATP to form Asp-AMP and then transferred to the acceptor end of tRNA(Asp/Asn). The chain is Aspartate--tRNA(Asp/Asn) ligase from Chlamydia trachomatis serovar L2 (strain ATCC VR-902B / DSM 19102 / 434/Bu).